Here is a 229-residue protein sequence, read N- to C-terminus: Clathrin light chain B (229 aa).

Low complexity-rich tracts occupy residues 1-17 (MAEDFGFFSSSESGAPE) and 45-58 (GAPAASQVASAQPG). Residues 1 to 70 (MAEDFGFFSS…SGAGSEDMST (70 aa)) are disordered. A phosphoserine mark is found at Ser11 and Ser13. An involved in binding clathrin heavy chain region spans residues 93–155 (ADRLTQEPES…QVEKNKINNR (63 aa)). Residue Thr187 is modified to Phosphothreonine. Residues Cys199 and Cys209 are joined by a disulfide bond. At Lys204 the chain carries N6-acetyllysine. Ser217 is subject to Phosphoserine.

This sequence belongs to the clathrin light chain family. In terms of assembly, clathrin coats are formed from molecules containing 3 heavy chains and 3 light chains. Interacts (via N-terminus) with HIP1. Interacts with HIP1R.

Its subcellular location is the cytoplasmic vesicle membrane. The protein resides in the membrane. It localises to the coated pit. Its function is as follows. Clathrin is the major protein of the polyhedral coat of coated pits and vesicles. The polypeptide is Clathrin light chain B (Cltb) (Mus musculus (Mouse)).